Here is a 357-residue protein sequence, read N- to C-terminus: S-adenosyl-L-methionine:benzoic acid/salicylic acid carboxyl methyltransferase 2 (357 aa).

Y18 provides a ligand contact to S-adenosyl-L-homocysteine. Q25 is a benzoate binding site. S-adenosyl-L-homocysteine contacts are provided by C59, N64, D96, L97, S135, and F136. W157 serves as a coordination point for benzoate. Residues N168, D254, F256, and N257 each contribute to the Mg(2+) site. Residue Q260 coordinates benzoate.

This sequence belongs to the methyltransferase superfamily. Type-7 methyltransferase family. In terms of tissue distribution, predominantly expressed in petal limbs and tubes of corollas.

It carries out the reaction benzoate + S-adenosyl-L-methionine = methyl benzoate + S-adenosyl-L-homocysteine. It catalyses the reaction salicylate + S-adenosyl-L-methionine = methyl salicylate + S-adenosyl-L-homocysteine. The protein operates within aromatic compound metabolism. Converts benzoic acid into the volatile ester methyl benzoates. This scent, mostly produced in a rhythmical, diurnal manner, attracts the pollinators. The chain is S-adenosyl-L-methionine:benzoic acid/salicylic acid carboxyl methyltransferase 2 from Petunia hybrida (Petunia).